The chain runs to 99 residues: Malonate decarboxylase acyl carrier protein (99 aa).

S25 carries the O-(phosphoribosyl dephospho-coenzyme A)serine modification.

Belongs to the MdcC family. Covalently binds the prosthetic group of malonate decarboxylase.

The protein localises to the cytoplasm. Subunit of malonate decarboxylase, it is an acyl carrier protein to which acetyl and malonyl thioester residues are bound via a 2'-(5''-phosphoribosyl)-3'-dephospho-CoA prosthetic group and turn over during the catalytic mechanism. The sequence is that of Malonate decarboxylase acyl carrier protein from Pseudomonas putida (Arthrobacter siderocapsulatus).